Reading from the N-terminus, the 255-residue chain is Shieldin complex subunit 3 (255 aa).

The segment at 33 to 88 (QDFPTHPLPRFIPWFPYDESKLPLKPERLPPVISEEAAESVKQYLAISEPGVKSQS) is sufficient for interaction with MAD2L2. Positions 116–135 (QTNAAHLDKNSGKEKQHKQR) are disordered.

As to quaternary structure, component of the shieldin complex, consisting of SHLD1, SHLD2, SHLD3 and MAD2L2/REV7. Within the complex, SHLD2 forms a scaffold which interacts with a SHLD3-MAD2L2 subcomplex via its N-terminus, and with SHLD1 via its C-terminus. Interacts with ASTE1.

It localises to the chromosome. In terms of biological role, component of the shieldin complex, which plays an important role in repair of DNA double-stranded breaks (DSBs). During G1 and S phase of the cell cycle, the complex functions downstream of TP53BP1 to promote non-homologous end joining (NHEJ) and suppress DNA end resection. Mediates various NHEJ-dependent processes including immunoglobulin class-switch recombination, and fusion of unprotected telomeres. This chain is Shieldin complex subunit 3, found in Mus musculus (Mouse).